Reading from the N-terminus, the 533-residue chain is CTP synthase (533 aa).

The segment at 1–269 is amidoligase domain; that stretch reads MKKNLKILVI…HEILSSKLNI (269 aa). Residue S16 coordinates CTP. Residue S16 coordinates UTP. ATP contacts are provided by residues 17 to 22 and D73; that span reads GIGKGV. D73 and E143 together coordinate Mg(2+). Residues 150–152, 190–195, and K226 each bind CTP; these read DME and KSKPTQ. UTP-binding positions include 190-195 and K226; that span reads KSKPTQ. Positions 304–533 constitute a Glutamine amidotransferase type-1 domain; sequence YAELDDSYAS…LFLGLIKACI (230 aa). G355 serves as a coordination point for L-glutamine. Catalysis depends on C382, which acts as the Nucleophile; for glutamine hydrolysis. Residues 383–386, E406, and R466 each bind L-glutamine; that span reads LGLQ. Catalysis depends on residues H511 and E513.

This sequence belongs to the CTP synthase family. In terms of assembly, homotetramer.

The enzyme catalyses UTP + L-glutamine + ATP + H2O = CTP + L-glutamate + ADP + phosphate + 2 H(+). It carries out the reaction L-glutamine + H2O = L-glutamate + NH4(+). The catalysed reaction is UTP + NH4(+) + ATP = CTP + ADP + phosphate + 2 H(+). The protein operates within pyrimidine metabolism; CTP biosynthesis via de novo pathway; CTP from UDP: step 2/2. Allosterically activated by GTP, when glutamine is the substrate; GTP has no effect on the reaction when ammonia is the substrate. The allosteric effector GTP functions by stabilizing the protein conformation that binds the tetrahedral intermediate(s) formed during glutamine hydrolysis. Inhibited by the product CTP, via allosteric rather than competitive inhibition. Catalyzes the ATP-dependent amination of UTP to CTP with either L-glutamine or ammonia as the source of nitrogen. Regulates intracellular CTP levels through interactions with the four ribonucleotide triphosphates. The chain is CTP synthase from Borreliella burgdorferi (strain ATCC 35210 / DSM 4680 / CIP 102532 / B31) (Borrelia burgdorferi).